Reading from the N-terminus, the 369-residue chain is N-succinyl-L-Arg/Lys racemase (369 aa).

Residues tyrosine 26, aspartate 51, 161 to 163 (KMK), and 191 to 193 (DVN) each bind substrate. The Mg(2+) site is built by aspartate 191, glutamate 218, and aspartate 243. Residues lysine 267, 295–296 (SM), and 320–322 (ELT) each bind substrate.

The protein belongs to the mandelate racemase/muconate lactonizing enzyme family. Requires Mg(2+) as cofactor.

Catalyzes efficient racemization of N-succinyl-L-Arg and N-succinyl-L-Lys, suggesting that these are physiological substrates of this enzyme. Has low activity with L-Asp-L-Lys, and even lower activity with L-Leu-L-Arg, L-Leu-L-Lys, N-succinyl-L-His and N-succinyl-L-Met (in vitro). In Bacillus cereus (strain ATCC 14579 / DSM 31 / CCUG 7414 / JCM 2152 / NBRC 15305 / NCIMB 9373 / NCTC 2599 / NRRL B-3711), this protein is N-succinyl-L-Arg/Lys racemase.